The primary structure comprises 622 residues: Cilia- and flagella-associated protein 206 (622 aa).

The segment at 568–593 (NTSQVYPLKEASTQSKREGSSRVPRP) is disordered.

This sequence belongs to the CFAP206 family. As to expression, expressed in the sperm, oviduct, lung, nasal cavity, brain ependyma and choroid plexus.

Its subcellular location is the cytoplasm. It is found in the cytoskeleton. It localises to the cilium axoneme. The protein localises to the cilium basal body. Functionally, essential for sperm motility and is involved in the regulation of the beating frequency of motile cilia on the epithelial cells of the respiratory tract. Required for the establishment of radial spokes in sperm flagella. In Mus musculus (Mouse), this protein is Cilia- and flagella-associated protein 206.